The following is a 413-amino-acid chain: Peptidase T (413 aa).

H82 contributes to the Zn(2+) binding site. D84 is a catalytic residue. D145 lines the Zn(2+) pocket. E179 (proton acceptor) is an active-site residue. 3 residues coordinate Zn(2+): E180, D202, and H384.

The protein belongs to the peptidase M20B family. The cofactor is Zn(2+).

It is found in the cytoplasm. It catalyses the reaction Release of the N-terminal residue from a tripeptide.. Cleaves the N-terminal amino acid of tripeptides. In Latilactobacillus sakei subsp. sakei (strain 23K) (Lactobacillus sakei subsp. sakei), this protein is Peptidase T.